We begin with the raw amino-acid sequence, 307 residues long: MFSFNMFDHPIPRVFQNRFSTQYRCFSVSMLAGPNDRSDVEKGGKIIMPPSALDQLSRLNITYPMLFKLTNKNSDRMTHCGVLEFVADEGICYLPHWMMQNLLLEEGGLVQVESVNLQVATYSKFQPQSPDFLDITNPKAVLENALRNFACLTTGDVIAINYNEKIYELRVMETKPDKAVSIIECDMNVDFDAPLGYKEPERQVQHEESTEGEADHSGYAGELGFRAFSGSGNRLDGKKKGVEPSPSPIKPGDIKRGIPNYEFKLGKITFIRNSRPLVKKVEEDEAGGRFVAFSGEGQSLRKKGRKP.

M1 carries the post-translational modification N-acetylmethionine. S129, S231, S245, S247, and S299 each carry phosphoserine. Disordered regions lie at residues 231–256 (SGNR…DIKR) and 288–307 (GRFV…GRKP).

Belongs to the UFD1 family. Heterodimer with NPLOC4, this heterodimer binds VCP and inhibits Golgi membrane fusion. Interacts with USP13. Interacts with ZFAND2B; probably through VCP. Found in adult heart, skeletal muscle and pancreas, and in fetal liver and kidney.

It localises to the nucleus. The protein resides in the cytoplasm. Its subcellular location is the cytosol. Its pathway is protein degradation; proteasomal ubiquitin-dependent pathway. Functionally, essential component of the ubiquitin-dependent proteolytic pathway which degrades ubiquitin fusion proteins. The ternary complex containing UFD1, VCP and NPLOC4 binds ubiquitinated proteins and is necessary for the export of misfolded proteins from the ER to the cytoplasm, where they are degraded by the proteasome. The NPLOC4-UFD1-VCP complex regulates spindle disassembly at the end of mitosis and is necessary for the formation of a closed nuclear envelope. It may be involved in the development of some ectoderm-derived structures. Acts as a negative regulator of type I interferon production via the complex formed with VCP and NPLOC4, which binds to RIGI and recruits RNF125 to promote ubiquitination and degradation of RIGI. The sequence is that of Ubiquitin recognition factor in ER-associated degradation protein 1 from Homo sapiens (Human).